A 448-amino-acid chain; its full sequence is Exodeoxyribonuclease 7 large subunit (448 aa).

This sequence belongs to the XseA family. In terms of assembly, heterooligomer composed of large and small subunits.

Its subcellular location is the cytoplasm. It catalyses the reaction Exonucleolytic cleavage in either 5'- to 3'- or 3'- to 5'-direction to yield nucleoside 5'-phosphates.. Bidirectionally degrades single-stranded DNA into large acid-insoluble oligonucleotides, which are then degraded further into small acid-soluble oligonucleotides. The chain is Exodeoxyribonuclease 7 large subunit from Exiguobacterium sp. (strain ATCC BAA-1283 / AT1b).